The sequence spans 519 residues: Importin subunit alpha-9 (519 aa).

The tract at residues 1–29 is disordered; that stretch reads MADDGSASNRRDPIKSSVGNVAGQRRRKQ. ARM repeat units follow at residues 116 to 156, 158 to 197, 200 to 239, 244 to 283, 286 to 326, 335 to 374, 377 to 416, and 429 to 468; these read FPPV…NIAA, KPEE…NVAG, EDLR…NLIK, KAAA…YLSA, DIAT…NFVA, ILIR…NIAA, IEHK…NLCV, and QEHL…LVLR.

It belongs to the importin alpha family. As to quaternary structure, forms a complex with importin subunit beta-1.

It localises to the nucleus envelope. Its function is as follows. Binds to conventional NLS motifs and mediates nuclear protein import across the nuclear envelope. Acts as a cellular receptor for the nuclear import of the virD2 protein of Agrobacterium, but is not essential for Agrobacterium-mediated root transformation. The chain is Importin subunit alpha-9 from Arabidopsis thaliana (Mouse-ear cress).